Reading from the N-terminus, the 400-residue chain is tRNA(Met) cytidine acetate ligase (400 aa).

ATP is bound by residues 7–20 (IVEY…HLYH), Gly-101, Asn-159, and Arg-184.

It belongs to the TmcAL family.

Its subcellular location is the cytoplasm. It catalyses the reaction cytidine(34) in elongator tRNA(Met) + acetate + ATP = N(4)-acetylcytidine(34) in elongator tRNA(Met) + AMP + diphosphate. Its function is as follows. Catalyzes the formation of N(4)-acetylcytidine (ac(4)C) at the wobble position of elongator tRNA(Met), using acetate and ATP as substrates. First activates an acetate ion to form acetyladenylate (Ac-AMP) and then transfers the acetyl group to tRNA to form ac(4)C34. In Caldicellulosiruptor saccharolyticus (strain ATCC 43494 / DSM 8903 / Tp8T 6331), this protein is tRNA(Met) cytidine acetate ligase.